A 440-amino-acid polypeptide reads, in one-letter code: Asparagine--tRNA ligase (440 aa).

This sequence belongs to the class-II aminoacyl-tRNA synthetase family. Homodimer.

It localises to the cytoplasm. The enzyme catalyses tRNA(Asn) + L-asparagine + ATP = L-asparaginyl-tRNA(Asn) + AMP + diphosphate + H(+). The chain is Asparagine--tRNA ligase from Roseiflexus sp. (strain RS-1).